Consider the following 294-residue polypeptide: RNA exonuclease 4 (294 aa).

The span at 1-13 (MVLSSNWLSLQKS) shows a compositional bias: polar residues. The segment at 1–56 (MVLSSNWLSLQKSTDSDSVNKNKGGKKTKSNSKKRTVSVKKDKQYVDKKKKNGTGS) is disordered. The span at 23-38 (KGGKKTKSNSKKRTVS) shows a compositional bias: basic residues. An Exonuclease domain is found at 119 to 271 (YVSMDCEFVG…EDARATMLLY (153 aa)).

Belongs to the REXO4 family.

The protein localises to the nucleus. In terms of biological role, exoribonuclease involved in ribosome biosynthesis. Involved in the processing of ITS1, the internal transcribed spacer localized between the 18S and 5.8S rRNAs. This chain is RNA exonuclease 4 (REX4), found in Kluyveromyces lactis (strain ATCC 8585 / CBS 2359 / DSM 70799 / NBRC 1267 / NRRL Y-1140 / WM37) (Yeast).